The following is a 237-amino-acid chain: tRNA1(Val) (adenine(37)-N6)-methyltransferase (237 aa).

The protein belongs to the methyltransferase superfamily. tRNA (adenine-N(6)-)-methyltransferase family.

The protein localises to the cytoplasm. It catalyses the reaction adenosine(37) in tRNA1(Val) + S-adenosyl-L-methionine = N(6)-methyladenosine(37) in tRNA1(Val) + S-adenosyl-L-homocysteine + H(+). Its function is as follows. Specifically methylates the adenine in position 37 of tRNA(1)(Val) (anticodon cmo5UAC). This is tRNA1(Val) (adenine(37)-N6)-methyltransferase from Bacteroides fragilis (strain YCH46).